Here is a 353-residue protein sequence, read N- to C-terminus: Photosystem II protein D1 (353 aa).

Thr-2 is modified (N-acetylthreonine). A Phosphothreonine modification is found at Thr-2. The next 3 membrane-spanning stretches (helical) occupy residues 29 to 46 (YIGW…TATS), 118 to 133 (HFLL…EWEL), and 142 to 156 (WIAV…AATA). Residue His-118 participates in chlorophyll a binding. Position 126 (Tyr-126) interacts with pheophytin a. [CaMn4O5] cluster contacts are provided by Asp-170 and Glu-189. Residues 197–218 (FHMLGVAGVFGGSLFSAMHGSL) traverse the membrane as a helical segment. His-198 provides a ligand contact to chlorophyll a. A quinone contacts are provided by residues His-215 and 264-265 (SF). His-215 is a Fe cation binding site. His-272 contacts Fe cation. Residues 274–288 (FLAAWPVVGIWFTAL) form a helical membrane-spanning segment. Positions 332, 333, and 344 each coordinate [CaMn4O5] cluster. The propeptide occupies 345 to 353 (AIEAPAVNG).

The protein belongs to the reaction center PufL/M/PsbA/D family. PSII is composed of 1 copy each of membrane proteins PsbA, PsbB, PsbC, PsbD, PsbE, PsbF, PsbH, PsbI, PsbJ, PsbK, PsbL, PsbM, PsbT, PsbX, PsbY, PsbZ, Psb30/Ycf12, at least 3 peripheral proteins of the oxygen-evolving complex and a large number of cofactors. It forms dimeric complexes. Requires The D1/D2 heterodimer binds P680, chlorophylls that are the primary electron donor of PSII, and subsequent electron acceptors. It shares a non-heme iron and each subunit binds pheophytin, quinone, additional chlorophylls, carotenoids and lipids. D1 provides most of the ligands for the Mn4-Ca-O5 cluster of the oxygen-evolving complex (OEC). There is also a Cl(-1) ion associated with D1 and D2, which is required for oxygen evolution. The PSII complex binds additional chlorophylls, carotenoids and specific lipids. as cofactor. Post-translationally, tyr-161 forms a radical intermediate that is referred to as redox-active TyrZ, YZ or Y-Z. In terms of processing, C-terminally processed by CTPA; processing is essential to allow assembly of the oxygen-evolving complex and thus photosynthetic growth.

The protein resides in the plastid. The protein localises to the chloroplast thylakoid membrane. The catalysed reaction is 2 a plastoquinone + 4 hnu + 2 H2O = 2 a plastoquinol + O2. Functionally, photosystem II (PSII) is a light-driven water:plastoquinone oxidoreductase that uses light energy to abstract electrons from H(2)O, generating O(2) and a proton gradient subsequently used for ATP formation. It consists of a core antenna complex that captures photons, and an electron transfer chain that converts photonic excitation into a charge separation. The D1/D2 (PsbA/PsbD) reaction center heterodimer binds P680, the primary electron donor of PSII as well as several subsequent electron acceptors. The polypeptide is Photosystem II protein D1 (Conocephalum japonicum (Liverwort)).